Reading from the N-terminus, the 258-residue chain is Bidirectional sugar transporter SWEET7 (258 aa).

Over 1-11 (MVFAHLNLLRK) the chain is Extracellular. Residues 12-32 (IVGIIGNFIALCLFLSPTPTF) traverse the membrane as a helical segment. Positions 12–100 (IVGIIGNFIA…IFFVYCGRQK (89 aa)) constitute a MtN3/slv 1 domain. Topologically, residues 33 to 46 (VRIVKKKSVEEYSP) are cytoplasmic. The helical transmembrane segment at 47–67 (IPYLATLINCLVWVLYGLPTV) threads the bilayer. Residues 68–73 (HPDSTL) are Extracellular-facing. The chain crosses the membrane as a helical span at residues 74 to 94 (VITINGTGILIEIVFLTIFFV). Topologically, residues 95-102 (YCGRQKQR) are cytoplasmic. The helical transmembrane segment at 103-123 (LIISAVIAAETAFIAILAVLV) threads the bilayer. The Extracellular portion of the chain corresponds to 124–134 (LTLQHTTEKRT). The helical transmembrane segment at 135 to 155 (MSVGIVCCVFNVMMYASPLSV) threads the bilayer. The MtN3/slv 2 domain maps to 136–221 (SVGIVCCVFN…LYGAYYKSTK (86 aa)). The Cytoplasmic portion of the chain corresponds to 156–166 (MKMVIKTKSVE). The chain crosses the membrane as a helical span at residues 167-187 (FMPFWLSVAGFLNAGVWTIYA). The Extracellular segment spans residues 188–193 (LMPFDP). A helical membrane pass occupies residues 194–214 (FMAIPNGIGCLFGLAQLILYG). The Cytoplasmic portion of the chain corresponds to 215 to 258 (AYYKSTKRIMAERENQPGYVGLSSAIARTGSEKTANTNQEPNNV).

Belongs to the SWEET sugar transporter family. Forms heterooligomers with SWEET8, SWEET11, SWEET13, SWEET16 and SWEET17.

It localises to the cell membrane. In terms of biological role, mediates both low-affinity uptake and efflux of sugar across the plasma membrane. The sequence is that of Bidirectional sugar transporter SWEET7 from Arabidopsis thaliana (Mouse-ear cress).